A 472-amino-acid chain; its full sequence is Eukaryotic translation initiation factor 2 subunit 3 (472 aa).

One can recognise a tr-type G domain in the interval 39 to 247 (QATINIGTIG…YIVNKIPVPV (209 aa)). The G1 stretch occupies residues 48–55 (GHVAHGKS). 51 to 56 (AHGKST) contacts GTP. A G2 region spans residues 76–80 (NITIK). A G3 region spans residues 134–137 (DCPG). GTP contacts are provided by residues 190–193 (NKID) and 225–227 (SAQ). Residues 190-193 (NKID) are G4. The segment at 225 to 227 (SAQ) is G5. Positions 457 to 469 (GQIRRGVTITPTV) are interacts with cdc123.

This sequence belongs to the TRAFAC class translation factor GTPase superfamily. Classic translation factor GTPase family. EIF2G subfamily. In terms of assembly, eukaryotic translation initiation factor 2 eIF2 is a heterotrimeric complex composed of an alpha (EIF2S1), a beta (EIF2S2) and a gamma (EIF2S3) chain. eIF2 is member of the 43S pre-initiation complex (43S PIC).

The protein resides in the cytoplasm. It localises to the cytosol. It carries out the reaction GTP + H2O = GDP + phosphate + H(+). Member of the eIF2 complex that functions in the early steps of protein synthesis by forming a ternary complex with GTP and initiator tRNA. This complex binds to a 40S ribosomal subunit, followed by mRNA binding to form the 43S pre-initiation complex (43S PIC). Junction of the 60S ribosomal subunit to form the 80S initiation complex is preceded by hydrolysis of the GTP bound to eIF2 and release of an eIF2-GDP binary complex. In order for eIF2 to recycle and catalyze another round of initiation, the GDP bound to eIF2 must exchange with GTP by way of a reaction catalyzed by eIF-2B. The sequence is that of Eukaryotic translation initiation factor 2 subunit 3 from Danio rerio (Zebrafish).